Consider the following 350-residue polypeptide: MSREGRRRTLRVLVVDDSAASRDELVRLLHGGDGLVVAGTAADGEQGLAEALRLEPDVVVLDLQMPRMDGFTFLRLLMARRPTPVVVLSSRSRRADVFKALELGALDFVARPERGGLAPVREELLEKCATVRALRIQNLSAGARALDARELEPARVAVVGASTGGPSALQRLLAALPGELPLAVLVAQHMPERFTGAFAERLARGSHFSVVEAVDGDLVVAGRALVAPGGHHLELARGADGVLRAAVLPPGAPGPGARHCPSIDRLFRSAARMLGRRACAALLTGMGTDGRDGIAAVKAAGGLTLAESEETAVVYGMPQAAAETGAVDALLGLDALTARLVEFARDARAP.

The Response regulatory domain occupies 11 to 126; that stretch reads RVLVVDDSAA…LAPVREELLE (116 aa). 4-aspartylphosphate is present on Asp-62. A CheB-type methylesterase domain is found at 150–347; sequence ELEPARVAVV…ARLVEFARDA (198 aa). Residues Ser-162, His-189, and Asp-289 contribute to the active site.

The protein belongs to the CheB family. Post-translationally, phosphorylated by CheA. Phosphorylation of the N-terminal regulatory domain activates the methylesterase activity.

It localises to the cytoplasm. It carries out the reaction [protein]-L-glutamate 5-O-methyl ester + H2O = L-glutamyl-[protein] + methanol + H(+). The catalysed reaction is L-glutaminyl-[protein] + H2O = L-glutamyl-[protein] + NH4(+). Its function is as follows. Involved in chemotaxis. Part of a chemotaxis signal transduction system that modulates chemotaxis in response to various stimuli. Catalyzes the demethylation of specific methylglutamate residues introduced into the chemoreceptors (methyl-accepting chemotaxis proteins or MCP) by CheR. Also mediates the irreversible deamidation of specific glutamine residues to glutamic acid. The polypeptide is Protein-glutamate methylesterase/protein-glutamine glutaminase 6 (Anaeromyxobacter dehalogenans (strain 2CP-C)).